We begin with the raw amino-acid sequence, 415 residues long: Mitogen-activated protein kinase kinae MST7 (415 aa).

A disordered region spans residues 1 to 37; sequence MADPFAPRTMKRRNVKGLALTPAAPKPPPTAENAPIH. In terms of domain architecture, Protein kinase spans 61–326; sequence LEVIKDLGSG…EELFERDPFV (266 aa). ATP is bound by residues 67–75 and K90; that span reads LGSGNGGTV. The segment at 363–409 is disordered; it reads DLLRSSDSPTATYHGDDRPLETPTSAYRVDPRRGPAEGSAGLADQVD.

This sequence belongs to the protein kinase superfamily. STE Ser/Thr protein kinase family. MAP kinase kinase subfamily. Homodimer. Interacts with the adapter protein MST50. Interacts with TRX2.

The catalysed reaction is L-seryl-[protein] + ATP = O-phospho-L-seryl-[protein] + ADP + H(+). It carries out the reaction L-threonyl-[protein] + ATP = O-phospho-L-threonyl-[protein] + ADP + H(+). Functionally, mitogen-activated protein kinase kinase; part of the MST11-MST7-PMK1 MAP kinase (MAPK) cascade that is essential for appressorium formation, penetration and invasive growth. The MST11-MST7-PMK1 MAP kinase cascade transduces signals from the cell surface sensors MDB2 and SHO1 that recognize various surface signals such as surface hydrophobicity, cutin monomers, and rice leaf waxes. MST7 acts as the upstream MAPKK that directly phosphorylates MAP kinase PMK1. This is Mitogen-activated protein kinase kinae MST7 from Pyricularia oryzae (strain 70-15 / ATCC MYA-4617 / FGSC 8958) (Rice blast fungus).